The primary structure comprises 151 residues: 3-hydroxyacyl-[acyl-carrier-protein] dehydratase FabZ (151 aa).

His56 is a catalytic residue.

Belongs to the thioester dehydratase family. FabZ subfamily.

Its subcellular location is the cytoplasm. The catalysed reaction is a (3R)-hydroxyacyl-[ACP] = a (2E)-enoyl-[ACP] + H2O. In terms of biological role, involved in unsaturated fatty acids biosynthesis. Catalyzes the dehydration of short chain beta-hydroxyacyl-ACPs and long chain saturated and unsaturated beta-hydroxyacyl-ACPs. The sequence is that of 3-hydroxyacyl-[acyl-carrier-protein] dehydratase FabZ from Rhodopseudomonas palustris (strain BisB18).